A 204-amino-acid chain; its full sequence is MLRIAIAKGRLMDSLINYLDAIEFTTLSETLKNRERQLLLSVDNIECILVKGSDVPIYVEQGIADIGIVGSDILDERHYNVNNLLNMPFGACHFAVAAKPETTNYRKIATSYVHTAETYFKSKGIDVELIKLNGSVELACVVDMVDGIVDIVQTGTTLKANGLVEKQHISDINARLITNKAAYFKKSQLIEQFIRSLEVSIANA.

Belongs to the ATP phosphoribosyltransferase family. Short subfamily. As to quaternary structure, heteromultimer composed of HisG and HisZ subunits.

It is found in the cytoplasm. It carries out the reaction 1-(5-phospho-beta-D-ribosyl)-ATP + diphosphate = 5-phospho-alpha-D-ribose 1-diphosphate + ATP. The protein operates within amino-acid biosynthesis; L-histidine biosynthesis; L-histidine from 5-phospho-alpha-D-ribose 1-diphosphate: step 1/9. Its function is as follows. Catalyzes the condensation of ATP and 5-phosphoribose 1-diphosphate to form N'-(5'-phosphoribosyl)-ATP (PR-ATP). Has a crucial role in the pathway because the rate of histidine biosynthesis seems to be controlled primarily by regulation of HisG enzymatic activity. The protein is ATP phosphoribosyltransferase of Staphylococcus aureus (strain MRSA252).